Consider the following 970-residue polypeptide: Polycystin-2 (970 aa).

Polar residues predominate over residues 1 to 11; sequence MVNSSRVQPQQ. The segment at 1–182 is disordered; that stretch reads MVNSSRVQPQ…GDPLHRHLPL (182 aa). The Cytoplasmic segment spans residues 1 to 221; that stretch reads MVNSSRVQPQ…STDREKYLKS (221 aa). A compositionally biased stretch (low complexity) spans 25–45; the sequence is GPGRLMAGGAIAGAGLAAPGG. A compositionally biased stretch (basic and acidic residues) spans 47-60; the sequence is REQRGLEIEMERIR. Positions 62-83 are enriched in low complexity; sequence AAARDPPAGASASPSPPLSSCS. Phosphoserine is present on residues S76 and S80. Residues 95-109 are compositionally biased toward acidic residues; the sequence is EAEEEEEEEEVEGEE. Low complexity predominate over residues 125–138; it reads RRSASSSAVSSAGA. The residue at position 139 (R139) is an Omega-N-methylarginine. The segment covering 139–148 has biased composition (gly residues); the sequence is RGRGLGGYHG. A helical membrane pass occupies residues 222-243; that stretch reads VLRELATYLLFLIVLCILTYGM. At 244–470 the chain is on the extracellular side; it reads MSSSVYYYTR…PVKLIRYVTT (227 aa). 3 N-linked (GlcNAc...) asparagine glycosylation sites follow: N301, N307, and N330. Cysteines 333 and 346 form a disulfide. Residues N364 and N377 are each glycosylated (N-linked (GlcNAc...) asparagine). A helical membrane pass occupies residues 471–491; sequence FDFFLAACEIIFCLFILYYVV. The Cytoplasmic segment spans residues 492–507; the sequence is EEILEIRIHKLHYFRS. A helical transmembrane segment spans residues 508-528; that stretch reads FWNCLDVVIIVLSVVAIGINI. Residues 529–554 lie on the Extracellular side of the membrane; that stretch reads YRTSNVEALLQFLEDQNTFPNFENLA. Residues 555-575 form a helical membrane-spanning segment; the sequence is YWQTQFNNIAAVIVFFVWIKL. Q559 is a cholesterol binding site. Residues 576–599 lie on the Cytoplasmic side of the membrane; sequence FKFINFNRTMSQLSTTMSRCAKDL. Residues 600–621 form a helical membrane-spanning segment; the sequence is FGFAIMFFIIFLAYAQLAYLVF. The Extracellular segment spans residues 622 to 633; it reads GTQVDDFSTFQE. Residues 634–648 constitute an intramembrane region (pore-forming); the sequence is CIFTQFRIILGDINF. L643 contributes to the Ca(2+) binding site. The Selectivity filter motif lies at 643–645; sequence LGD. The Extracellular portion of the chain corresponds to 649 to 656; sequence AEIEEANR. The chain crosses the membrane as a helical span at residues 657–677; the sequence is VLGPIYFTTFVFFMFFILLNM. The Cytoplasmic portion of the chain corresponds to 678–970; the sequence is FLAIINDTYS…GGNGSANIHV (293 aa). Residues 750 to 785 form the EF-hand domain; the sequence is KGHTDAEIEAIFTKYDQDGDQELTEHEHQQMRDDLE. Positions 765, 767, 769, 771, and 776 each coordinate Ca(2+). The tract at residues 766-833 is disordered; the sequence is QDGDQELTEH…HSSRRRGSIS (68 aa). Over residues 772–797 the composition is skewed to basic and acidic residues; that stretch reads LTEHEHQQMRDDLEKEREDLDLDHSS. The segment covering 798–809 has biased composition (low complexity); the sequence is LPRPMSSRSFPR. Phosphoserine is present on residues S803, S810, S814, and S831. The segment at 805 to 824 is linker; that stretch reads RSFPRSLDDSEEEDDDDSGH. An important for interaction with PACS1 and PACS2 region spans residues 812 to 823; sequence DDSEEEDDDDSG. Positions 835–874 form a coiled coil; the sequence is GVSYEEFQVLVRRVDRMEHSIGSIVSKIDAVIVKLEIMER. The disordered stretch occupies residues 921–970; that stretch reads DDAASQISHGLGTPLGLNGQPRPRSSRPSSSQSTEGMEGGGGNGSANIHV. The segment covering 940–956 has biased composition (low complexity); that stretch reads QPRPRSSRPSSSQSTEG.

Belongs to the polycystin family. In terms of assembly, homotetramer. Component of the heterotetrameric polycystin channel complex with PKD1; the tetramer contains one PKD1 chain and three PKD2 chains. Isoform 1 interacts with PKD1 while isoform 3 does not. Interacts with PKD1L1; probably forms a Ca(2+) channel. Interacts with CD2AP. Interacts with HAX1. Interacts with NEK8. Part of a complex containing AKAP5, ADCY5, ADCY6 and PDE4C. Interacts (via C-terminus) with TRPV4 (via C-terminus). Interacts (via C-terminal acidic region) with PACS1 and PACS2; these interactions retain the protein in the endoplasmic reticulum and prevent trafficking to the cell membrane. Interacts with TMEM33. Form a heterotetramer with TRPC1 with a 2:2 stoichiometry; has distinct channel properties separate from PKD2 or TRPC1 homomers alone. Interacts with TMEM120A; TMEM120A inhibits PKD2 channel activity through the physical association of PKD2 with TMEM120A. Interacts (via N-terminus) with RYR2; regulates RYR2 channel activity. In terms of processing, N-glycosylated. The four subunits in a tetramer probably differ in the extent of glycosylation; simultaneous glycosylation of all experimentally validated sites would probably create steric hindrance. Phosphorylated. Phosphorylation is important for protein function; a mutant that lacks the N-terminal phosphorylation sites cannot complement a zebrafish pkd2-deficient mutant. PKD-mediated phosphorylation at the C-terminus regulates its function in the release of Ca(2+) stores from the endoplasmic reticulum. Phosphorylation at Ser-814 regulates PKD2 trafficking. Phosphorylation at Ser-76 is required for PKD2 trafficking to or retention at the lateral plasma membrane. Phosphorylation at Ser-803, Ser-814 and Ser-831 regulates PKD2 channel activity. Post-translationally, sumoylated by SUMO1; sumoylation regulates PKD2 membrane recycling and is necessary for intravascular pressure-induced arterial contractility. As to expression, expressed in mesenchymally derived structures in the developing embryo at day 12.5. In adult, mostly expressed in kidney.

The protein localises to the cell projection. The protein resides in the cilium membrane. It localises to the endoplasmic reticulum membrane. It is found in the cell membrane. Its subcellular location is the basolateral cell membrane. The protein localises to the cytoplasmic vesicle membrane. The protein resides in the golgi apparatus. It localises to the vesicle. It is found in the secreted. Its subcellular location is the extracellular exosome. The catalysed reaction is K(+)(in) = K(+)(out). It carries out the reaction Na(+)(in) = Na(+)(out). The enzyme catalyses Ca(2+)(in) = Ca(2+)(out). Its activity is regulated as follows. Channel activity is regulated by phosphorylation. Channel activity is regulated by intracellular Ca(2+). At the endoplasmic reticulum membrane (ER), TMEM33 enhances its channel activity. TMEM120A inhibits the channel activity of PKD2, and mediates mechanosensitivity of the PKD2-TMEM120A channel complex. PKD1/PKD2 complex on the plasma membrane is activated by PKD1 N-terminus. Forms a nonselective cation channel. Can function as a homotetrameric ion channel or can form heteromer with PKD1. Displays distinct function depending on its subcellular localization and regulation by its binding partners. Functions as a cation channel, with a preference for monovalent cations over divalent cations that allows K(+), Na(+) and Ca(2+) influx, with low selectivity for Ca(2+). Involved in fluid-flow mechanosensation in the primary cilium in renal epithelium. In the endoplasmic reticulum, likely functions as a K(+) channel to facilitate Ca(2+) release. The heterotetrameric PKD1/PKD2 channel has higher Ca(2+) permeability than homomeric PKD2 channel and acts as a primarily Ca(2+)-permeable channel. Interacts with and acts as a regulator of a number of other channels, such as TRPV4, TRPC1, IP3R, RYR2, ultimately further affecting intracellular signaling, to modulate intracellular Ca(2+) signaling. Together with TRPV4, forms mechano- and thermosensitive channels in cilium. In cardiomyocytes, PKD2 modulates Ca(2+) release from stimulated RYR2 receptors through direct association. Also involved in left-right axis specification via its role in sensing nodal flow; forms a complex with PKD1L1 in cilia to facilitate flow detection in left-right patterning. Acts as a regulator of cilium length together with PKD1. Mediates systemic blood pressure and contributes to the myogenic response in cerebral arteries though vasoconstriction. The chain is Polycystin-2 from Bos taurus (Bovine).